The chain runs to 442 residues: Chromosomal replication initiator protein DnaA (442 aa).

Residues 1 to 75 (MDAWPRCLER…GNGEVALAVG (75 aa)) are domain I, interacts with DnaA modulators. The tract at residues 75–104 (GSRPRAPEPAPAPVAATIAPQAAPIAPFAG) is domain II. The segment at 105–322 (NLDSHYTFAN…GALNTLVARA (218 aa)) is domain III, AAA+ region. Positions 150, 152, 153, and 154 each coordinate ATP. Residues 323 to 442 (NFTGRSITVE…WEKLIRKLSE (120 aa)) are domain IV, binds dsDNA.

Belongs to the DnaA family. In terms of assembly, oligomerizes as a right-handed, spiral filament on DNA at oriC.

The protein localises to the cytoplasm. Plays an essential role in the initiation and regulation of chromosomal replication. ATP-DnaA binds to the origin of replication (oriC) to initiate formation of the DNA replication initiation complex once per cell cycle. Binds the DnaA box (a 9 base pair repeat at the origin) and separates the double-stranded (ds)DNA. Forms a right-handed helical filament on oriC DNA; dsDNA binds to the exterior of the filament while single-stranded (ss)DNA is stabiized in the filament's interior. The ATP-DnaA-oriC complex binds and stabilizes one strand of the AT-rich DNA unwinding element (DUE), permitting loading of DNA polymerase. After initiation quickly degrades to an ADP-DnaA complex that is not apt for DNA replication. Binds acidic phospholipids. This Xanthomonas oryzae pv. oryzae (strain PXO99A) protein is Chromosomal replication initiator protein DnaA.